The following is a 546-amino-acid chain: CTP synthase (546 aa).

Residues 1-266 (MAKYYIFITG…DSYVCDRFCI (266 aa)) are amidoligase domain. Ser14 serves as a coordination point for CTP. Ser14 is a binding site for UTP. ATP contacts are provided by residues 15-20 (SLGKGI) and Asp72. 2 residues coordinate Mg(2+): Asp72 and Glu140. Residues 147–149 (DIE), 187–192 (KTKPTQ), and Lys223 each bind CTP. UTP is bound by residues 187 to 192 (KTKPTQ) and Lys223. The Glutamine amidotransferase type-1 domain maps to 291–544 (NIGIIGKYTE…VKAAFDFKNK (254 aa)). Gly352 contacts L-glutamine. Cys379 serves as the catalytic Nucleophile; for glutamine hydrolysis. L-glutamine is bound by residues 380–383 (LGMQ), Glu403, and Arg470. Active-site residues include His517 and Glu519.

The protein belongs to the CTP synthase family. As to quaternary structure, homotetramer.

The catalysed reaction is UTP + L-glutamine + ATP + H2O = CTP + L-glutamate + ADP + phosphate + 2 H(+). The enzyme catalyses L-glutamine + H2O = L-glutamate + NH4(+). It catalyses the reaction UTP + NH4(+) + ATP = CTP + ADP + phosphate + 2 H(+). The protein operates within pyrimidine metabolism; CTP biosynthesis via de novo pathway; CTP from UDP: step 2/2. Allosterically activated by GTP, when glutamine is the substrate; GTP has no effect on the reaction when ammonia is the substrate. The allosteric effector GTP functions by stabilizing the protein conformation that binds the tetrahedral intermediate(s) formed during glutamine hydrolysis. Inhibited by the product CTP, via allosteric rather than competitive inhibition. Catalyzes the ATP-dependent amination of UTP to CTP with either L-glutamine or ammonia as the source of nitrogen. Regulates intracellular CTP levels through interactions with the four ribonucleotide triphosphates. This is CTP synthase from Wigglesworthia glossinidia brevipalpis.